Consider the following 920-residue polypeptide: Rho GTPase-activating protein REN1 (920 aa).

A compositionally biased stretch (polar residues) spans 1 to 10; the sequence is MANKNAESSS. Positions 1–64 are disordered; sequence MANKNAESSS…SRGGNTVFKS (64 aa). Residues 17-31 are compositionally biased toward low complexity; it reads QPNQQQQQQPPIANE. A compositionally biased stretch (polar residues) spans 45–64; it reads PAQSGNTDSRSRGGNTVFKS. In terms of domain architecture, PH spans 60–167; the sequence is TVFKSGPLSI…WKAALENALT (108 aa). The Rho-GAP domain maps to 213–412; it reads LALEDVDGAP…TLLEEYESIF (200 aa). 3 disordered regions span residues 417-592, 719-825, and 837-920; these read LSPG…NLSM, RLGH…ALSK, and RSQI…TFSR. Residues 434 to 463 are compositionally biased toward acidic residues; the sequence is EGSDDEEYDDDDDGSQGSEDYTDEEEDLEN. A compositionally biased stretch (polar residues) spans 464 to 473; the sequence is ESNGSYSESA. 3 stretches are compositionally biased toward basic and acidic residues: residues 475–491, 499–509, and 520–532; these read SEDK…HKIN, KSPKRSKEPKK, and PRHD…EDIV. Residues 555–568 show a composition bias toward polar residues; that stretch reads SSTSDVASDTQKPS. Residues 577-586 show a composition bias toward basic residues; it reads SKRHWGRTPG. Positions 598–728 form a coiled coil; it reads SVEVDEDNAD…RLGHHDGKAS (131 aa). Composition is skewed to basic and acidic residues over residues 734 to 768 and 776 to 788; these read ASKE…RSTS and RENE…DSRS. Low complexity predominate over residues 814–825; the sequence is EGSTTTTSALSK. Composition is skewed to polar residues over residues 854–864 and 872–885; these read GQPSPTSGQNR and GSGS…SKLQ. The segment covering 889–903 has biased composition (basic and acidic residues); the sequence is ILDRGRSENGGDRGR. The segment covering 910 to 920 has biased composition (polar residues); that stretch reads HPNTTPRTFSR.

In terms of assembly, interacts with ARAC11/ROP1. In terms of tissue distribution, expressed in pollen and pollen tubes.

It is found in the cell membrane. Functionally, acts as a GTPase activator for the Rac-type GTPase by converting it to an inactive GDP-bound state. Maintains the global inactivation of ARAC11/ROP1 at the apex in pollen tubes in order to regulate the polar cell growth. In Arabidopsis thaliana (Mouse-ear cress), this protein is Rho GTPase-activating protein REN1 (REN1).